We begin with the raw amino-acid sequence, 638 residues long: Guanylate-binding protein 7 (638 aa).

Residues 1–310 (MASGPNMEAP…DAINSGDVPC (310 aa)) are GTPase domain (Globular). The GB1/RHD3-type G domain maps to 35-277 (TQPVVVVAIV…FCSYIFSNSK (243 aa)). GTP is bound by residues 45–52 (GLYRTGKS), 67–69 (LGT), and 97–101 (DTEGL). Residues 311–638 (LENAVTTLAQ…TQNSDKVRKL (328 aa)) are interaction with the CYBA-CYBB complex. The interval 590-638 (SSLGAKILDGFGDVLISVVPGSGKYFGLGLKILSSQMNQTQNSDKVRKL) is C-terminal tail; required for its localization to cytoplasmic vesicle.

This sequence belongs to the TRAFAC class dynamin-like GTPase superfamily. GB1/RHD3 GTPase family. GB1 subfamily. In terms of assembly, monomer and dimer. Interacts with CYBA, CYBA-CYBB complex and ATG4B. Interacts (via GB1/RHD3-type G domain) with NCF2 and NCF2-NCF4 complex.

The protein resides in the cytoplasmic vesicle membrane. It catalyses the reaction GTP + H2O = GDP + phosphate + H(+). It carries out the reaction GDP + H2O = GMP + phosphate + H(+). With respect to regulation, inhibited by orthovanadate, berylium fluoride and aluminum flouride. Its function is as follows. Interferon (IFN)-inducible GTPase that plays important roles in innate immunity against a diverse range of bacterial, viral and protozoan pathogens. Hydrolyzes GTP to GMP in two consecutive cleavage reactions and predominantly uses GTP and not GDP or GMP as the substrate. Following infection, recruited to the pathogen-containing vacuoles or vacuole-escaped bacteria and acts as a positive regulator of inflammasome assembly by promoting the release of inflammasome ligands from bacteria. Acts by promoting lysis of pathogen-containing vacuoles, releasing pathogens into the cytosol. Following pathogen release in the cytosol, promotes recruitment of proteins that mediate bacterial cytolysis, such as Gm12250/Irgb10: this liberates ligands that are detected by inflammasomes, such as lipopolysaccharide (LPS) that activates the non-canonical CASP4/CASP11 inflammasome or double-stranded DNA (dsDNA) that activates the AIM2 inflammasome. Also promotes IFN-gamma-mediated host defense against bacterial infections by regulating oxidative responses and bacteriolytic peptide generation. May help to assemble NADPH oxidase on phagosomal membranes by acting as a bridging protein between NADPH oxidase cytosolic subunits NCF2-NCF4 and the membrane subunits CYBA-CYBB. Participates along with GBP1 in trafficking monoubiquinated protein cargo to autolysosomes for generating ubiquitin-derived antimicrobial peptides. Facilitates influenza A virus replication by inhibiting the activation of NF-kappaB and JAK-STAT signaling pathways and the expression of type I, type III interferons and pro-inflammatory cytokines. Confers protection to several pathogens, including the bacterial pathogens Listeria monocytogenes and Mycobacterium bovis BCG as well as the protozoan pathogen Toxoplasma gondii. Required for disruption of the parasitophorous vacuole formed following T.gondii infection and subsequent killing of the parasite. This chain is Guanylate-binding protein 7 (Gbp7), found in Mus musculus (Mouse).